Here is a 473-residue protein sequence, read N- to C-terminus: tRNA-2-methylthio-N(6)-dimethylallyladenosine synthase (473 aa).

The 121-residue stretch at 5–125 (RKLHIKSYGC…LPQLLARAKA (121 aa)) folds into the MTTase N-terminal domain. [4Fe-4S] cluster is bound by residues cysteine 14, cysteine 50, cysteine 88, cysteine 166, cysteine 170, and cysteine 173. The 233-residue stretch at 152–384 (RARGISAFVT…QNLIDSQQSA (233 aa)) folds into the Radical SAM core domain. The TRAM domain maps to 387–449 (RAAVGTTVDV…RYSLLGSLAS (63 aa)). The span at 453–462 (SRASADDAPP) shows a compositional bias: low complexity. The tract at residues 453–473 (SRASADDAPPVGASSPAIMGV) is disordered.

Belongs to the methylthiotransferase family. MiaB subfamily. In terms of assembly, monomer. Requires [4Fe-4S] cluster as cofactor.

Its subcellular location is the cytoplasm. It catalyses the reaction N(6)-dimethylallyladenosine(37) in tRNA + (sulfur carrier)-SH + AH2 + 2 S-adenosyl-L-methionine = 2-methylsulfanyl-N(6)-dimethylallyladenosine(37) in tRNA + (sulfur carrier)-H + 5'-deoxyadenosine + L-methionine + A + S-adenosyl-L-homocysteine + 2 H(+). Its function is as follows. Catalyzes the methylthiolation of N6-(dimethylallyl)adenosine (i(6)A), leading to the formation of 2-methylthio-N6-(dimethylallyl)adenosine (ms(2)i(6)A) at position 37 in tRNAs that read codons beginning with uridine. The chain is tRNA-2-methylthio-N(6)-dimethylallyladenosine synthase from Nitrobacter hamburgensis (strain DSM 10229 / NCIMB 13809 / X14).